The chain runs to 276 residues: MTWNATLALDYTRQAGKTVAHFRHSGPLRILQSLYPEGDAICHNVIVHPPGGLVGGDTLDLQFSASAGAHGLITTPGATRFYRSTGEPALQRTHLTLEAGARMEWLPLEAICYSGCLAENHLTMTLAPGAELIGWDITALGLPAASLPFAHGSFCQHIEVPGVWLERARIQASDTLLMSSPLGMAGHRCVASLFFVAGSKLDRHRRQQALDTARQIIEAHPLSATAGATSPDGQVVVVRVLAPVVEPAMALLRQVWLAWRSHFWQQAASSPRIWSM.

It belongs to the UreD family. UreD, UreF and UreG form a complex that acts as a GTP-hydrolysis-dependent molecular chaperone, activating the urease apoprotein by helping to assemble the nickel containing metallocenter of UreC. The UreE protein probably delivers the nickel.

It is found in the cytoplasm. In terms of biological role, required for maturation of urease via the functional incorporation of the urease nickel metallocenter. This Polaromonas sp. (strain JS666 / ATCC BAA-500) protein is Urease accessory protein UreD.